A 198-amino-acid chain; its full sequence is MSTVDLARVGACILKHAVTGEAVELRSLWRERACVVAGLRRFGCVVCRWIAQDLSSLAGLLDQHGVRLVGVGPEALGLQEFLDGDYFAGELYLDESKQLYNELGFKRYNSPSILPAALGKPVRDVAAKAKAVGIQGNLSGDLLQSGGLLVVSKGGDKVLLHFVQKSPGDYVPKEHILQVLGISAEVCASNPPQCDREA.

At tyrosine 108 the chain carries Phosphotyrosine.

Belongs to the peroxiredoxin-like PRXL2 family. Prostamide/prostaglandin F synthase subfamily.

It is found in the cytoplasm. Its subcellular location is the cytosol. It catalyses the reaction prostaglandin H2 + [thioredoxin]-dithiol = prostaglandin F2alpha + [thioredoxin]-disulfide. The catalysed reaction is prostamide F2alpha + [thioredoxin]-disulfide = prostamide H2 + [thioredoxin]-dithiol. Functionally, catalyzes the reduction of prostaglandin-ethanolamide H(2) (prostamide H(2)) to prostamide F(2alpha) with NADPH as proton donor. Also able to reduce prostaglandin H(2) to prostaglandin F(2alpha). This Pongo abelii (Sumatran orangutan) protein is Prostamide/prostaglandin F synthase (PRXL2B).